Reading from the N-terminus, the 443-residue chain is Histidinol dehydrogenase (443 aa).

NAD(+) is bound by residues Y127, Q185, and N208. Residues S234, Q256, and H259 each coordinate substrate. Positions 256 and 259 each coordinate Zn(2+). Residues E323 and H324 each act as proton acceptor in the active site. The substrate site is built by H324, D357, E411, and H416. Residue D357 participates in Zn(2+) binding. H416 is a binding site for Zn(2+).

Belongs to the histidinol dehydrogenase family. It depends on Zn(2+) as a cofactor.

The enzyme catalyses L-histidinol + 2 NAD(+) + H2O = L-histidine + 2 NADH + 3 H(+). Its pathway is amino-acid biosynthesis; L-histidine biosynthesis; L-histidine from 5-phospho-alpha-D-ribose 1-diphosphate: step 9/9. Its function is as follows. Catalyzes the sequential NAD-dependent oxidations of L-histidinol to L-histidinaldehyde and then to L-histidine. In Photobacterium profundum (strain SS9), this protein is Histidinol dehydrogenase.